The chain runs to 480 residues: Protein nucleotidyltransferase YdiU (480 aa).

Residues G86, G88, R89, K109, D121, G122, R172, and R179 each contribute to the ATP site. D248 functions as the Proton acceptor in the catalytic mechanism. The Mg(2+) site is built by N249 and D258. D258 is an ATP binding site.

The protein belongs to the SELO family. The cofactor is Mg(2+). Requires Mn(2+) as cofactor.

It carries out the reaction L-seryl-[protein] + ATP = 3-O-(5'-adenylyl)-L-seryl-[protein] + diphosphate. It catalyses the reaction L-threonyl-[protein] + ATP = 3-O-(5'-adenylyl)-L-threonyl-[protein] + diphosphate. The enzyme catalyses L-tyrosyl-[protein] + ATP = O-(5'-adenylyl)-L-tyrosyl-[protein] + diphosphate. The catalysed reaction is L-histidyl-[protein] + UTP = N(tele)-(5'-uridylyl)-L-histidyl-[protein] + diphosphate. It carries out the reaction L-seryl-[protein] + UTP = O-(5'-uridylyl)-L-seryl-[protein] + diphosphate. It catalyses the reaction L-tyrosyl-[protein] + UTP = O-(5'-uridylyl)-L-tyrosyl-[protein] + diphosphate. In terms of biological role, nucleotidyltransferase involved in the post-translational modification of proteins. It can catalyze the addition of adenosine monophosphate (AMP) or uridine monophosphate (UMP) to a protein, resulting in modifications known as AMPylation and UMPylation. The protein is Protein nucleotidyltransferase YdiU of Klebsiella pneumoniae (strain 342).